Here is a 318-residue protein sequence, read N- to C-terminus: Holliday junction branch migration complex subunit RuvB (318 aa).

A large ATPase domain (RuvB-L) region spans residues 1–168 (MPENLEIRPS…FGYVAKIVDY (168 aa)). ATP contacts are provided by I7, R8, G49, K52, T53, T54, R158, Y168, and R205. Position 53 (T53) interacts with Mg(2+). Positions 169-239 (TLEDMIQIIR…IVNKTFDSIG (71 aa)) are small ATPAse domain (RuvB-S). The segment at 242 to 318 (NQGLSQINIE…RDYLLELKTN (77 aa)) is head domain (RuvB-H). R278, K297, and R302 together coordinate DNA.

This sequence belongs to the RuvB family. Homohexamer. Forms an RuvA(8)-RuvB(12)-Holliday junction (HJ) complex. HJ DNA is sandwiched between 2 RuvA tetramers; dsDNA enters through RuvA and exits via RuvB. An RuvB hexamer assembles on each DNA strand where it exits the tetramer. Each RuvB hexamer is contacted by two RuvA subunits (via domain III) on 2 adjacent RuvB subunits; this complex drives branch migration. In the full resolvosome a probable DNA-RuvA(4)-RuvB(12)-RuvC(2) complex forms which resolves the HJ.

The protein localises to the cytoplasm. It carries out the reaction ATP + H2O = ADP + phosphate + H(+). The RuvA-RuvB-RuvC complex processes Holliday junction (HJ) DNA during genetic recombination and DNA repair, while the RuvA-RuvB complex plays an important role in the rescue of blocked DNA replication forks via replication fork reversal (RFR). RuvA specifically binds to HJ cruciform DNA, conferring on it an open structure. The RuvB hexamer acts as an ATP-dependent pump, pulling dsDNA into and through the RuvAB complex. RuvB forms 2 homohexamers on either side of HJ DNA bound by 1 or 2 RuvA tetramers; 4 subunits per hexamer contact DNA at a time. Coordinated motions by a converter formed by DNA-disengaged RuvB subunits stimulates ATP hydrolysis and nucleotide exchange. Immobilization of the converter enables RuvB to convert the ATP-contained energy into a lever motion, pulling 2 nucleotides of DNA out of the RuvA tetramer per ATP hydrolyzed, thus driving DNA branch migration. The RuvB motors rotate together with the DNA substrate, which together with the progressing nucleotide cycle form the mechanistic basis for DNA recombination by continuous HJ branch migration. Branch migration allows RuvC to scan DNA until it finds its consensus sequence, where it cleaves and resolves cruciform DNA. The protein is Holliday junction branch migration complex subunit RuvB of Mesomycoplasma hyopneumoniae (strain 232) (Mycoplasma hyopneumoniae).